The chain runs to 105 residues: Large ribosomal subunit protein uL24 (105 aa).

It belongs to the universal ribosomal protein uL24 family. Part of the 50S ribosomal subunit.

Functionally, one of two assembly initiator proteins, it binds directly to the 5'-end of the 23S rRNA, where it nucleates assembly of the 50S subunit. In terms of biological role, one of the proteins that surrounds the polypeptide exit tunnel on the outside of the subunit. This Leptothrix cholodnii (strain ATCC 51168 / LMG 8142 / SP-6) (Leptothrix discophora (strain SP-6)) protein is Large ribosomal subunit protein uL24.